The chain runs to 288 residues: HTH-type transcriptional regulator CzcR (288 aa).

The 58-residue stretch at 1 to 58 folds into the HTH lysR-type domain; it reads MELRDLQIFQSVADQGSVSSAAKELNYVQSNVTARIKQLENELKTPLFYRHKRGMTLT. Positions 18–37 form a DNA-binding region, H-T-H motif; the sequence is VSSAAKELNYVQSNVTARIK.

The protein belongs to the LysR transcriptional regulatory family.

This Bacillus cereus (strain ATCC 10987 / NRS 248) protein is HTH-type transcriptional regulator CzcR (czcR).